A 145-amino-acid chain; its full sequence is Hemoglobin subunit beta (145 aa).

In terms of domain architecture, Globin spans 1 to 145 (MLTAEEKAAV…VANALAHRYH (145 aa)). Thr-11 is modified (phosphothreonine). Position 43 is a phosphoserine (Ser-43). At Lys-58 the chain carries N6-acetyllysine. A heme b-binding site is contributed by His-62. N6-acetyllysine is present on Lys-81. Heme b is bound at residue His-91. The residue at position 92 (Cys-92) is an S-nitrosocysteine.

This sequence belongs to the globin family. Heterotetramer of two alpha chains and two beta chains. As to expression, red blood cells.

Functionally, involved in oxygen transport from the lung to the various peripheral tissues. This chain is Hemoglobin subunit beta (HBB), found in Tragelaphus strepsiceros (Greater kudu).